The chain runs to 267 residues: Acyl-[acyl-carrier-protein]--UDP-N-acetylglucosamine O-acyltransferase (267 aa).

The protein belongs to the transferase hexapeptide repeat family. LpxA subfamily. Homotrimer.

It localises to the cytoplasm. The enzyme catalyses a (3R)-hydroxyacyl-[ACP] + UDP-N-acetyl-alpha-D-glucosamine = a UDP-3-O-[(3R)-3-hydroxyacyl]-N-acetyl-alpha-D-glucosamine + holo-[ACP]. It functions in the pathway glycolipid biosynthesis; lipid IV(A) biosynthesis; lipid IV(A) from (3R)-3-hydroxytetradecanoyl-[acyl-carrier-protein] and UDP-N-acetyl-alpha-D-glucosamine: step 1/6. Its function is as follows. Involved in the biosynthesis of lipid A, a phosphorylated glycolipid that anchors the lipopolysaccharide to the outer membrane of the cell. The chain is Acyl-[acyl-carrier-protein]--UDP-N-acetylglucosamine O-acyltransferase from Proteus mirabilis (strain HI4320).